The following is a 388-amino-acid chain: S-adenosylmethionine synthase (388 aa).

ATP is bound at residue His16. Asp18 contributes to the Mg(2+) binding site. Glu44 contributes to the K(+) binding site. Positions 57 and 100 each coordinate L-methionine. Positions 100 to 110 (QSPDIAQGVNE) are flexible loop. Residues 167 to 169 (DGK), 233 to 234 (RF), Asp242, 248 to 249 (RK), and Lys269 each bind ATP. Asp242 serves as a coordination point for L-methionine. Lys273 provides a ligand contact to L-methionine.

It belongs to the AdoMet synthase family. In terms of assembly, homotetramer; dimer of dimers. The cofactor is Mg(2+). It depends on K(+) as a cofactor.

The protein resides in the cytoplasm. It catalyses the reaction L-methionine + ATP + H2O = S-adenosyl-L-methionine + phosphate + diphosphate. The protein operates within amino-acid biosynthesis; S-adenosyl-L-methionine biosynthesis; S-adenosyl-L-methionine from L-methionine: step 1/1. In terms of biological role, catalyzes the formation of S-adenosylmethionine (AdoMet) from methionine and ATP. The overall synthetic reaction is composed of two sequential steps, AdoMet formation and the subsequent tripolyphosphate hydrolysis which occurs prior to release of AdoMet from the enzyme. This is S-adenosylmethionine synthase from Desulfosudis oleivorans (strain DSM 6200 / JCM 39069 / Hxd3) (Desulfococcus oleovorans).